The primary structure comprises 44 residues: Antibacterial protein 3 (44 aa).

Methionine 1 bears the N-formylmethionine mark.

The protein belongs to the staphylococcal hemolytic protein family.

Its subcellular location is the secreted. Functionally, has hemolytic activity and also inhibits the growth of gonococci. The chain is Antibacterial protein 3 from Staphylococcus haemolyticus.